Here is a 249-residue protein sequence, read N- to C-terminus: 2,3-bisphosphoglycerate-dependent phosphoglycerate mutase (249 aa).

Residues 8–15 (RHGESTWN), 21–22 (TG), arginine 60, 87–90 (ERHY), lysine 98, 114–115 (RR), and 183–184 (GN) each bind substrate. Histidine 9 acts as the Tele-phosphohistidine intermediate in catalysis. Glutamate 87 (proton donor/acceptor) is an active-site residue.

It belongs to the phosphoglycerate mutase family. BPG-dependent PGAM subfamily. As to quaternary structure, homodimer.

It carries out the reaction (2R)-2-phosphoglycerate = (2R)-3-phosphoglycerate. It participates in carbohydrate degradation; glycolysis; pyruvate from D-glyceraldehyde 3-phosphate: step 3/5. Functionally, catalyzes the interconversion of 2-phosphoglycerate and 3-phosphoglycerate. In Burkholderia mallei (strain NCTC 10247), this protein is 2,3-bisphosphoglycerate-dependent phosphoglycerate mutase.